The following is a 1829-amino-acid chain: Unconventional myosin-Va (1829 aa).

One can recognise a Myosin N-terminal SH3-like domain in the interval 8 to 60; it reads TKYARVWIPDPEEVWKSAELLKDYKPGDKVLQLRLEEGKDLEYCLDPKTKELP. A Myosin motor domain is found at 69–764; sequence VGENDLTALS…QVAYLEKIRA (696 aa). Position 163 to 170 (163 to 170) interacts with ATP; sequence GESGAGKT. The tract at residues 599–635 is disordered; sequence AISPTSATPSGRVPLSRTPVKPAKARPGQTSKEHKKT. An actin-binding region spans residues 644-666; it reads LHLLMETLNATTPHYVRCIKPND. IQ domains lie at 767–789, 790–814, 815–837, 838–862, 863–887, and 888–915; these read LRAACIRIQKTIRGWLMRKKYMR, MRRAAITIQRYVRGHQARCYATFLR, RTRAAIIIQKFQRMYVVRKRYQC, MRDATIALQALLRGYLVRNKYQMML, REHKSIIIQKHVRGWLARVHYHRTL, and KAIVYLQCCYRRMMAKRELKKLKIEARS. 2 coiled-coil regions span residues 916 to 1239 and 1315 to 1419; these read VERY…PEVT and GLKE…ELEV. Disordered stretches follow at residues 1106–1148 and 1170–1199; these read IPKP…SEKK and KQSLQDELDRKEEQALRAKAKEEERPPIRG. The segment covering 1117–1131 has biased composition (polar residues); it reads THSSNESEYTFSSEI. Composition is skewed to basic and acidic residues over residues 1137–1148 and 1170–1196; these read LPLRMEEPSEKK and KQSLQDELDRKEEQALRAKAKEEERPP. Positions 1508-1784 constitute a Dilute domain; it reads TSTINGIKKV…IRTIQLRLRD (277 aa). Position 1734 is a phosphothreonine (T1734).

The protein belongs to the TRAFAC class myosin-kinesin ATPase superfamily. Myosin family. In terms of assembly, may be a homodimer, which associates with multiple calmodulin or myosin light chains. In terms of tissue distribution, neuronal and non-neuronal cells of the brain.

The protein localises to the golgi apparatus membrane. The catalysed reaction is ATP + H2O = ADP + phosphate + H(+). Functionally, processive actin-based motor that can move in large steps approximating the 36-nm pseudo-repeat of the actin filament. Can hydrolyze ATP in the presence of actin, which is essential for its function as a motor protein. Involved in melanosome transport. Also mediates the transport of vesicles to the plasma membrane. May also be required for some polarization process involved in dendrite formation. In Gallus gallus (Chicken), this protein is Unconventional myosin-Va (MYO5A).